The chain runs to 279 residues: NAD kinase (279 aa).

The active-site Proton acceptor is the D57. Residues 57–58 (DG), 133–134 (NE), R159, D161, and 172–177 (TAYNKS) contribute to the NAD(+) site.

Belongs to the NAD kinase family. A divalent metal cation serves as cofactor.

It is found in the cytoplasm. The catalysed reaction is NAD(+) + ATP = ADP + NADP(+) + H(+). Involved in the regulation of the intracellular balance of NAD and NADP, and is a key enzyme in the biosynthesis of NADP. Catalyzes specifically the phosphorylation on 2'-hydroxyl of the adenosine moiety of NAD to yield NADP. The chain is NAD kinase from Streptococcus pyogenes serotype M28 (strain MGAS6180).